The sequence spans 155 residues: Cytochrome c-550 (155 aa).

The N-terminal stretch at 1–20 (MKISIYATLAAITLALPAAA) is a signal peptide. Gln21 carries the pyrrolidone carboxylic acid modification. Cys35, Cys38, His39, and Met120 together coordinate heme c. Positions 150-155 (AEGESN) are excised as a propeptide.

Post-translationally, binds 1 heme c group covalently per subunit.

This chain is Cytochrome c-550 (cycA), found in Paracoccus denitrificans.